The following is a 765-amino-acid chain: DNA ligase (765 aa).

A disordered region spans residues 1–34 (MAGDDEDRAVPAAEGAPPPSALPPVSGLDVKAAE). NAD(+) is bound by residues 61–65 (DAEYD), 110–111 (SL), and Glu-144. Lys-146 acts as the N6-AMP-lysine intermediate in catalysis. Positions 167, 204, 317, and 341 each coordinate NAD(+). Residues Cys-446, Cys-449, Cys-464, and Cys-470 each coordinate Zn(2+). The BRCT domain occupies 687–765 (ATDSAIAGKT…EDEWLAIAQG (79 aa)).

Belongs to the NAD-dependent DNA ligase family. LigA subfamily. Mg(2+) serves as cofactor. Mn(2+) is required as a cofactor.

The catalysed reaction is NAD(+) + (deoxyribonucleotide)n-3'-hydroxyl + 5'-phospho-(deoxyribonucleotide)m = (deoxyribonucleotide)n+m + AMP + beta-nicotinamide D-nucleotide.. DNA ligase that catalyzes the formation of phosphodiester linkages between 5'-phosphoryl and 3'-hydroxyl groups in double-stranded DNA using NAD as a coenzyme and as the energy source for the reaction. It is essential for DNA replication and repair of damaged DNA. This is DNA ligase from Paracoccus denitrificans (strain Pd 1222).